Reading from the N-terminus, the 208-residue chain is Uracil phosphoribosyltransferase (208 aa).

5-phospho-alpha-D-ribose 1-diphosphate is bound by residues Arg78, Arg103, and 130-138 (DPMLATGGS). Residues Ile193 and 198-200 (GDA) each bind uracil. Asp199 is a 5-phospho-alpha-D-ribose 1-diphosphate binding site.

Belongs to the UPRTase family. It depends on Mg(2+) as a cofactor.

It carries out the reaction UMP + diphosphate = 5-phospho-alpha-D-ribose 1-diphosphate + uracil. Its pathway is pyrimidine metabolism; UMP biosynthesis via salvage pathway; UMP from uracil: step 1/1. With respect to regulation, allosterically activated by GTP. Functionally, catalyzes the conversion of uracil and 5-phospho-alpha-D-ribose 1-diphosphate (PRPP) to UMP and diphosphate. The polypeptide is Uracil phosphoribosyltransferase (Pectobacterium atrosepticum (strain SCRI 1043 / ATCC BAA-672) (Erwinia carotovora subsp. atroseptica)).